A 427-amino-acid chain; its full sequence is GTPase Obg (427 aa).

One can recognise an Obg domain in the interval Met1–Leu158. The tract at residues Lys118–Glu144 is disordered. The 171-residue stretch at Ala159–Glu329 folds into the OBG-type G domain. GTP-binding positions include Gly165–Ser172, Phe190–Thr194, Asp212–Gly215, Asn282–Asp285, and Ser310–Leu312. The Mg(2+) site is built by Ser172 and Thr192. The OCT domain maps to Lys349–Glu427.

The protein belongs to the TRAFAC class OBG-HflX-like GTPase superfamily. OBG GTPase family. As to quaternary structure, monomer. The cofactor is Mg(2+).

The protein resides in the cytoplasm. Its function is as follows. An essential GTPase which binds GTP, GDP and possibly (p)ppGpp with moderate affinity, with high nucleotide exchange rates and a fairly low GTP hydrolysis rate. Plays a role in control of the cell cycle, stress response, ribosome biogenesis and in those bacteria that undergo differentiation, in morphogenesis control. The sequence is that of GTPase Obg from Halalkalibacterium halodurans (strain ATCC BAA-125 / DSM 18197 / FERM 7344 / JCM 9153 / C-125) (Bacillus halodurans).